The sequence spans 225 residues: uncharacterized protein (225 aa).

Positions 1-19 (MKFNSISPNKQHHTGFTTS) are enriched in polar residues. The disordered stretch occupies residues 1-21 (MKFNSISPNKQHHTGFTTSNN).

This is an uncharacterized protein from Dictyostelium discoideum (Social amoeba).